A 222-amino-acid polypeptide reads, in one-letter code: Eukaryotic translation initiation factor 3 subunit K (222 aa).

Residues 46 to 208 (YDLEANLAVL…KIKTKNITEK (163 aa)) enclose the PCI domain.

Belongs to the eIF-3 subunit K family. Component of the eukaryotic translation initiation factor 3 (eIF-3) complex. The eIF-3 complex interacts with pix.

It is found in the cytoplasm. Component of the eukaryotic translation initiation factor 3 (eIF-3) complex, which is involved in protein synthesis of a specialized repertoire of mRNAs and, together with other initiation factors, stimulates binding of mRNA and methionyl-tRNAi to the 40S ribosome. The eIF-3 complex specifically targets and initiates translation of a subset of mRNAs involved in cell proliferation. The polypeptide is Eukaryotic translation initiation factor 3 subunit K (Drosophila willistoni (Fruit fly)).